We begin with the raw amino-acid sequence, 44 residues long: Photosystem II reaction center protein J (44 aa).

The chain crosses the membrane as a helical span at residues 12-32 (IPLWIVGFVVGSLALGLLGIL).

This sequence belongs to the PsbJ family. In terms of assembly, PSII is composed of 1 copy each of membrane proteins PsbA, PsbB, PsbC, PsbD, PsbE, PsbF, PsbH, PsbI, PsbJ, PsbK, PsbL, PsbM, PsbT, PsbY, PsbZ, Psb30/Ycf12, at least 3 peripheral proteins of the oxygen-evolving complex and a large number of cofactors. It forms dimeric complexes.

It is found in the plastid. Its subcellular location is the chloroplast thylakoid membrane. Functionally, one of the components of the core complex of photosystem II (PSII). PSII is a light-driven water:plastoquinone oxidoreductase that uses light energy to abstract electrons from H(2)O, generating O(2) and a proton gradient subsequently used for ATP formation. It consists of a core antenna complex that captures photons, and an electron transfer chain that converts photonic excitation into a charge separation. This is Photosystem II reaction center protein J from Bigelowiella natans (Pedinomonas minutissima).